We begin with the raw amino-acid sequence, 147 residues long: Prefoldin subunit alpha (147 aa).

Belongs to the prefoldin alpha subunit family. As to quaternary structure, heterohexamer of two alpha and four beta subunits.

It localises to the cytoplasm. Functionally, molecular chaperone capable of stabilizing a range of proteins. Seems to fulfill an ATP-independent, HSP70-like function in archaeal de novo protein folding. The sequence is that of Prefoldin subunit alpha from Thermococcus onnurineus (strain NA1).